The sequence spans 457 residues: Adenylosuccinate synthetase isozyme 1 (457 aa).

Residues 1–25 (MSGTRASNDRPPSAGGVKRGRLQHE) form a disordered region. GTP contacts are provided by residues 42–48 (GDEGKGK) and 70–72 (GHT). D43 acts as the Proton acceptor in catalysis. Positions 43 and 70 each coordinate Mg(2+). A substrate-binding site is contributed by D43. Residues 43-46 (DEGK), 68-71 (NAGH), T163, R177, N256, T271, and R335 contribute to the IMP site. The active-site Proton donor is the H71. 331–337 (VTTGRKR) provides a ligand contact to substrate. GTP contacts are provided by residues R337, 363-365 (KLD), and 445-448 (GVGK).

Belongs to the adenylosuccinate synthetase family. Homodimer. Mg(2+) serves as cofactor. In terms of tissue distribution, predominantly expressed in the striated muscle tissues.

It localises to the cytoplasm. The catalysed reaction is IMP + L-aspartate + GTP = N(6)-(1,2-dicarboxyethyl)-AMP + GDP + phosphate + 2 H(+). Its pathway is purine metabolism; AMP biosynthesis via de novo pathway; AMP from IMP: step 1/2. Functionally, component of the purine nucleotide cycle (PNC), which interconverts IMP and AMP to regulate the nucleotide levels in various tissues, and which contributes to glycolysis and ammoniagenesis. Catalyzes the first committed step in the biosynthesis of AMP from IMP. The protein is Adenylosuccinate synthetase isozyme 1 of Sus scrofa (Pig).